A 670-amino-acid polypeptide reads, in one-letter code: UvrABC system protein B (670 aa).

Positions 26-414 (EGLEDGLAHQ…GGDVIDQVVR (389 aa)) constitute a Helicase ATP-binding domain. 39–46 (GVTGSGKT) provides a ligand contact to ATP. Positions 92 to 115 (YYDYYQPEAYVPSSDTFIEKDASV) match the Beta-hairpin motif. The Helicase C-terminal domain maps to 431–597 (QVDDLLSEIR…GINKKISDIL (167 aa)). The UVR domain occupies 630–665 (ELKIRELESKMLTHAQNLEFEEAAALRDEVQVLRAQ).

This sequence belongs to the UvrB family. As to quaternary structure, forms a heterotetramer with UvrA during the search for lesions. Interacts with UvrC in an incision complex.

It is found in the cytoplasm. Functionally, the UvrABC repair system catalyzes the recognition and processing of DNA lesions. A damage recognition complex composed of 2 UvrA and 2 UvrB subunits scans DNA for abnormalities. Upon binding of the UvrA(2)B(2) complex to a putative damaged site, the DNA wraps around one UvrB monomer. DNA wrap is dependent on ATP binding by UvrB and probably causes local melting of the DNA helix, facilitating insertion of UvrB beta-hairpin between the DNA strands. Then UvrB probes one DNA strand for the presence of a lesion. If a lesion is found the UvrA subunits dissociate and the UvrB-DNA preincision complex is formed. This complex is subsequently bound by UvrC and the second UvrB is released. If no lesion is found, the DNA wraps around the other UvrB subunit that will check the other stand for damage. The polypeptide is UvrABC system protein B (Pectobacterium atrosepticum (strain SCRI 1043 / ATCC BAA-672) (Erwinia carotovora subsp. atroseptica)).